Here is a 103-residue protein sequence, read N- to C-terminus: UPF0145 protein PTH_2690 (103 aa).

This sequence belongs to the UPF0145 family.

The chain is UPF0145 protein PTH_2690 from Pelotomaculum thermopropionicum (strain DSM 13744 / JCM 10971 / SI).